Consider the following 190-residue polypeptide: Shikimate kinase (190 aa).

14–19 (GAGKST) lines the ATP pocket. S18 is a binding site for Mg(2+). Substrate contacts are provided by D36, R60, and G82. R120 serves as a coordination point for ATP. A substrate-binding site is contributed by R139.

Belongs to the shikimate kinase family. In terms of assembly, monomer. It depends on Mg(2+) as a cofactor.

It is found in the cytoplasm. It catalyses the reaction shikimate + ATP = 3-phosphoshikimate + ADP + H(+). The protein operates within metabolic intermediate biosynthesis; chorismate biosynthesis; chorismate from D-erythrose 4-phosphate and phosphoenolpyruvate: step 5/7. Functionally, catalyzes the specific phosphorylation of the 3-hydroxyl group of shikimic acid using ATP as a cosubstrate. In Thioalkalivibrio sulfidiphilus (strain HL-EbGR7), this protein is Shikimate kinase.